The chain runs to 119 residues: MIQKNTLLEVADNSGAREVLCIGLLGGRKSASIGDTIVVSTKSVNPKGKVEKGKVYRAVVVRVKNCIRKSDNSVIRFSSNAVVLVNNQGEPLGTRVFGPVKKLPSGSFMKIMSLAVEVL.

Belongs to the universal ribosomal protein uL14 family. In terms of assembly, part of the 50S ribosomal subunit. Forms a cluster with proteins L3 and L19. In the 70S ribosome, L14 and L19 interact and together make contacts with the 16S rRNA in bridges B5 and B8.

Binds to 23S rRNA. Forms part of two intersubunit bridges in the 70S ribosome. The sequence is that of Large ribosomal subunit protein uL14 from Wolbachia sp. subsp. Brugia malayi (strain TRS).